Here is a 299-residue protein sequence, read N- to C-terminus: Serpentine receptor class gamma-30 (299 aa).

Helical transmembrane passes span Gly18–Leu38, Ile59–Pro79, Ile98–Val118, Ile137–Phe157, Ile189–Ile209, Leu223–Tyr243, and Ala260–Leu280.

Belongs to the nematode receptor-like protein srg family.

It is found in the membrane. The sequence is that of Serpentine receptor class gamma-30 (srg-30) from Caenorhabditis elegans.